The sequence spans 333 residues: Eukaryotic translation initiation factor 2 subunit 2 (333 aa).

Disordered regions lie at residues 1-119 (MSGD…DLDI) and 139-164 (ILEK…NQTG). Position 2 is an N-acetylserine (Ser-2). Residues Ser-2 and Ser-13 each carry the phosphoserine modification. Basic residues predominate over residues 13–22 (SKKKKKKKKP). 2 positions are modified to phosphothreonine: Thr-31 and Thr-36. The span at 40–51 (ETKEVEPEPTED) shows a compositional bias: basic and acidic residues. Phosphoserine is present on Ser-67. Residues 96-105 (EGVKDLKIES) are compositionally biased toward basic and acidic residues. Lys-102 participates in a covalent cross-link: Glycyl lysine isopeptide (Lys-Gly) (interchain with G-Cter in SUMO2). At Ser-105 the chain carries Phosphoserine. Acidic residues-rich tracts occupy residues 106-118 (DVQE…DDLD) and 139-149 (ILEKDEALEDE). Position 111 is a phosphothreonine (Thr-111). Ser-158 and Ser-218 each carry phosphoserine. N6-acetyllysine is present on residues Lys-265 and Lys-293. The C4-type zinc finger occupies 281-305 (CHTCRSPDTILQKDTRLYFLQCETC).

Belongs to the eIF-2-beta/eIF-5 family. As to quaternary structure, eukaryotic translation initiation factor 2 eIF2 is a heterotrimeric complex composed of an alpha (EIF2S1), a beta (EIF2S2) and a gamma (EIF2S3) chain. eIF2 is member of the 43S pre-initiation complex (43S PIC). eIF2 forms a complex with at least CELF1/CUGBP1, CALR, CALR3, EIF2S1, EIF2S2, HSP90B1 and HSPA5. Interacts with BZW2/5MP1. Interacts with EIF5.

It localises to the cytoplasm. The protein resides in the cytosol. In terms of biological role, component of the eIF2 complex that functions in the early steps of protein synthesis by forming a ternary complex with GTP and initiator tRNA. This complex binds to a 40S ribosomal subunit, followed by mRNA binding to form the 43S pre-initiation complex (43S PIC). Junction of the 60S ribosomal subunit to form the 80S initiation complex is preceded by hydrolysis of the GTP bound to eIF2 and release of an eIF2-GDP binary complex. In order for eIF2 to recycle and catalyze another round of initiation, the GDP bound to eIF2 must exchange with GTP by way of a reaction catalyzed by eIF2B. The sequence is that of Eukaryotic translation initiation factor 2 subunit 2 (EIF2S2) from Pongo abelii (Sumatran orangutan).